Reading from the N-terminus, the 176-residue chain is Large ribosomal subunit protein uL6 (176 aa).

This sequence belongs to the universal ribosomal protein uL6 family. Part of the 50S ribosomal subunit.

Its function is as follows. This protein binds to the 23S rRNA, and is important in its secondary structure. It is located near the subunit interface in the base of the L7/L12 stalk, and near the tRNA binding site of the peptidyltransferase center. This Methanosarcina mazei (strain ATCC BAA-159 / DSM 3647 / Goe1 / Go1 / JCM 11833 / OCM 88) (Methanosarcina frisia) protein is Large ribosomal subunit protein uL6.